We begin with the raw amino-acid sequence, 598 residues long: Pentatricopeptide repeat-containing protein At1g09900 (598 aa).

14 PPR repeats span residues 101–135, 136–170, 171–201, 203–237, 238–272, 273–307, 308–342, 343–377, 378–412, 413–447, 448–482, 483–517, 518–552, and 553–587; these read EDVE…GNVP, DIIP…GAVP, DVIT…MSVS, DVVT…DCYP, DVIT…GCTP, DVVT…GCQP, NVIT…GFSP, SVVT…GCQP, NSLS…GCYP, DIVT…GCSP, VLIT…DLKP, DTIT…GIRP, NAVT…GCKP, and NETS…GLMK.

It belongs to the PPR family. P subfamily.

The chain is Pentatricopeptide repeat-containing protein At1g09900 from Arabidopsis thaliana (Mouse-ear cress).